Consider the following 302-residue polypeptide: Adipolin (302 aa).

The first 20 residues, 1 to 20 (MRRWAWAAVVVLLGPQLVLL), serve as a signal peptide directing secretion. Disordered regions lie at residues 28 to 68 (EAQR…GPEF) and 86 to 110 (ALRKRCGSRDKKPRDLFGPPGPPGA). N-linked (GlcNAc...) asparagine glycosylation occurs at Asn-43. Residues 86 to 100 (ALRKRCGSRDKKPRD) are compositionally biased toward basic and acidic residues. The region spanning 147 to 302 (LRLVGEAFHC…SSFSGLLLGT (156 aa)) is the C1q domain.

Belongs to the adipolin/erythroferrone family. As to quaternary structure, homomultimer; disulfide-linked. May interact with ERFE. Processed into Adipolin fC1QTNF12 and Adipolin gC1QTNF12 by FURIN. Insulin enhances endogenous C1QTNF12 cleavage. Predominantly expressed by adipose tissues.

The protein resides in the secreted. Insulin-sensitizing adipocyte-secreted protein (adipokine) that regulates glucose metabolism in liver and adipose tissue. Promotes glucose uptake in adipocytes and suppresses de novo glucose production in hepatocytes via the PI3K-Akt signaling pathway. Administration lead to reduction of blood glucose. Able to attenuate inflammation in fat tissue. The chain is Adipolin from Homo sapiens (Human).